We begin with the raw amino-acid sequence, 121 residues long: Small ribosomal subunit protein bS6 (121 aa).

Residues 99 to 121 (PLPAPRVAPGTEAPAEPEAAAPA) are disordered. Residues 110–121 (EAPAEPEAAAPA) are compositionally biased toward low complexity.

Belongs to the bacterial ribosomal protein bS6 family.

Binds together with bS18 to 16S ribosomal RNA. The protein is Small ribosomal subunit protein bS6 of Synechococcus sp. (strain CC9311).